Reading from the N-terminus, the 140-residue chain is Coiled-coil domain-containing protein 126 (140 aa).

A signal peptide spans 1 to 26 (MFFTISRKNMSQKLSLLLLVFGLIWG). Asn-110 and Asn-134 each carry an N-linked (GlcNAc...) asparagine glycan. The interval 120–140 (TSGNLVPVTTNKRTNVSGSIR) is disordered.

It is found in the secreted. The chain is Coiled-coil domain-containing protein 126 (CCDC126) from Homo sapiens (Human).